Reading from the N-terminus, the 402-residue chain is Triose phosphate/phosphate translocator, non-green plastid, chloroplastic (402 aa).

The N-terminal 82 residues, 1–82 (MQSSAVFSAS…SLDTNRFKTA (82 aa)), are a transit peptide targeting the chloroplast. Residues 83 to 98 (ATAVPEEGEGSGKMTK) lie on the Chloroplast intermembrane side of the membrane. The chain crosses the membrane as a helical span at residues 99–119 (VLELGLLFAMWYLFNIYFNIY). The EamA domain maps to 118-236 (IYNKQVLKAL…IVGGVALASV (119 aa)). The Lumenal segment spans residues 120-131 (NKQVLKALHAPM). A helical transmembrane segment spans residues 132–152 (TVTLVQFAVGSVLITFMWALN). At 153-209 (LYKRPKISAAQLAAILPLAVVHTLGNLFTNMSLGKVSVSFTHTIKAMEPFFSVVLSA) the chain is on the chloroplast intermembrane side. A helical membrane pass occupies residues 210 to 230 (MFLGEVPTPWVIGSIIPIVGG). The Lumenal portion of the chain corresponds to 231–278 (VALASVTEVSFNWAGFLSAMASNLTNQSRNVLSKKVMVKKDDSLDNIT). A helical membrane pass occupies residues 279 to 298 (LFSIITLMSLFLMAPVTFFS). Residues 299-374 (EGIKFTPSYI…IFFKTPVSPV (76 aa)) lie on the Chloroplast intermembrane side of the membrane. A helical transmembrane segment spans residues 375–394 (NAFGTGIALAGVFLYSRVKR). Residues 395–402 (IKPKPKTA) lie on the Lumenal side of the membrane.

This sequence belongs to the TPT transporter family. TPT (TC 2.A.7.9) subfamily. As to quaternary structure, homodimer.

The protein resides in the plastid. It localises to the chloroplast membrane. Functionally, mediates the export of fixed carbons from the chloroplasts into the cytosol in the form of triose phosphates. The chain is Triose phosphate/phosphate translocator, non-green plastid, chloroplastic (NGTPT) from Brassica oleracea var. botrytis (Cauliflower).